Consider the following 37-residue polypeptide: Large ribosomal subunit protein bL36c (37 aa).

It belongs to the bacterial ribosomal protein bL36 family.

It is found in the plastid. The chain is Large ribosomal subunit protein bL36c from Helicosporidium sp. subsp. Simulium jonesii (Green alga).